A 108-amino-acid polypeptide reads, in one-letter code: Large ribosomal subunit protein bL21 (108 aa).

Belongs to the bacterial ribosomal protein bL21 family. As to quaternary structure, part of the 50S ribosomal subunit. Contacts protein L20.

Functionally, this protein binds to 23S rRNA in the presence of protein L20. This Buchnera aphidicola subsp. Acyrthosiphon pisum (strain 5A) protein is Large ribosomal subunit protein bL21.